The sequence spans 163 residues: Nucleotide-binding protein MAP_4063c (163 aa).

It belongs to the YajQ family.

Functionally, nucleotide-binding protein. This is Nucleotide-binding protein MAP_4063c from Mycolicibacterium paratuberculosis (strain ATCC BAA-968 / K-10) (Mycobacterium paratuberculosis).